We begin with the raw amino-acid sequence, 372 residues long: GPN-loop GTPase 1 (372 aa).

N-acetylalanine is present on Ala2. Residue 29 to 34 (GSGKTT) coordinates GTP. The Gly-Pro-Asn (GPN)-loop; involved in dimer interface signature appears at 86 to 88 (GPN). 189-192 (NKTD) contacts GTP. Ser301 and Ser314 each carry phosphoserine. The disordered stretch occupies residues 303–372 (ALDPEAGKGN…ESMAHWKRNK (70 aa)). The residue at position 328 (Thr328) is a Phosphothreonine. Residues 330–342 (DEEDEEADSDTDD) show a composition bias toward acidic residues. A Phosphoserine modification is found at Ser338. Phosphothreonine is present on Thr340. Residues 343 to 355 (IDHRVTEESREEP) show a composition bias toward basic and acidic residues.

It belongs to the GPN-loop GTPase family. In terms of assembly, heterodimer with GPN3. Binds to RNA polymerase II (RNAPII). Interacts directly with RNAPII subunits RPB4 and RPB7 and the CTD of RPB1. Interacts with XPA.

It localises to the cytoplasm. It is found in the nucleus. Small GTPase required for proper nuclear import of RNA polymerase II (RNAPII). May act at an RNAP assembly step prior to nuclear import. Forms an interface between the RNA polymerase II enzyme and chaperone/scaffolding proteins, suggesting that it is required to connect RNA polymerase II to regulators of protein complex formation. May be involved in nuclear localization of XPA. The chain is GPN-loop GTPase 1 from Mus musculus (Mouse).